A 221-amino-acid chain; its full sequence is Octanoyltransferase (221 aa).

The BPL/LPL catalytic domain maps to 36–221; it reads KKEDNQLFFC…LRSIFMEIFA (186 aa). Substrate contacts are provided by residues 81-88, 154-156, and 167-169; these read RGGDITYH, AIG, and GFA. Cys-185 acts as the Acyl-thioester intermediate in catalysis.

The protein belongs to the LipB family.

It is found in the cytoplasm. It catalyses the reaction octanoyl-[ACP] + L-lysyl-[protein] = N(6)-octanoyl-L-lysyl-[protein] + holo-[ACP] + H(+). It participates in protein modification; protein lipoylation via endogenous pathway; protein N(6)-(lipoyl)lysine from octanoyl-[acyl-carrier-protein]: step 1/2. Catalyzes the transfer of endogenously produced octanoic acid from octanoyl-acyl-carrier-protein onto the lipoyl domains of lipoate-dependent enzymes. Lipoyl-ACP can also act as a substrate although octanoyl-ACP is likely to be the physiological substrate. This is Octanoyltransferase from Parabacteroides distasonis (strain ATCC 8503 / DSM 20701 / CIP 104284 / JCM 5825 / NCTC 11152).